The chain runs to 438 residues: (S)-3,5-dihydroxyphenylglycine transaminase (438 aa).

Residue K266 is modified to N6-(pyridoxal phosphate)lysine.

The protein belongs to the class-I pyridoxal-phosphate-dependent aminotransferase family. The cofactor is pyridoxal 5'-phosphate.

It catalyses the reaction (S)-3,5-dihydroxyphenylglycine + 2-oxoglutarate = 2-(3,5-dihydroxyphenyl)-2-oxoacetate + L-glutamate. Its pathway is antibiotic biosynthesis; vancomycin biosynthesis. In terms of biological role, catalyzes the transamination of p-hydroxybenzoylformate to L-p-hydroxyphenylglycine as part of the biosynthesis of the (S)-3,5-dihydroxyphenylglycine constituent of the glycopeptide antibiotic chloroeremomycin, a member of the vancomycin group of antibiotics. This Amycolatopsis orientalis (Nocardia orientalis) protein is (S)-3,5-dihydroxyphenylglycine transaminase (hpgT).